We begin with the raw amino-acid sequence, 97 residues long: Large ribosomal subunit protein eL21 (97 aa).

The protein belongs to the eukaryotic ribosomal protein eL21 family.

This chain is Large ribosomal subunit protein eL21, found in Methanococcus vannielii (strain ATCC 35089 / DSM 1224 / JCM 13029 / OCM 148 / SB).